The sequence spans 420 residues: Histidine--tRNA ligase (420 aa).

This sequence belongs to the class-II aminoacyl-tRNA synthetase family. In terms of assembly, homodimer.

The protein localises to the cytoplasm. It carries out the reaction tRNA(His) + L-histidine + ATP = L-histidyl-tRNA(His) + AMP + diphosphate + H(+). This chain is Histidine--tRNA ligase, found in Nitrosomonas europaea (strain ATCC 19718 / CIP 103999 / KCTC 2705 / NBRC 14298).